The primary structure comprises 622 residues: Glutamyl-tRNA(Gln) amidotransferase subunit E (622 aa).

This sequence belongs to the GatB/GatE family. GatE subfamily. Heterodimer of GatD and GatE.

The catalysed reaction is L-glutamyl-tRNA(Gln) + L-glutamine + ATP + H2O = L-glutaminyl-tRNA(Gln) + L-glutamate + ADP + phosphate + H(+). In terms of biological role, allows the formation of correctly charged Gln-tRNA(Gln) through the transamidation of misacylated Glu-tRNA(Gln) in organisms which lack glutaminyl-tRNA synthetase. The reaction takes place in the presence of glutamine and ATP through an activated gamma-phospho-Glu-tRNA(Gln). The GatDE system is specific for glutamate and does not act on aspartate. In Halobacterium salinarum (strain ATCC 29341 / DSM 671 / R1), this protein is Glutamyl-tRNA(Gln) amidotransferase subunit E.